The primary structure comprises 288 residues: 2-methoxy-6-polyprenyl-1,4-benzoquinol methylase, mitochondrial (288 aa).

Residues 1–27 (MALRSVSRRLGSRILNQRSFVASLHSH) constitute a mitochondrion transit peptide. S-adenosyl-L-methionine contacts are provided by residues Thr-94, Asp-130, and 160–161 (DA).

This sequence belongs to the class I-like SAM-binding methyltransferase superfamily. MenG/UbiE family. Component of a multi-subunit COQ enzyme complex.

The protein resides in the mitochondrion inner membrane. The catalysed reaction is a 2-methoxy-6-(all-trans-polyprenyl)benzene-1,4-diol + S-adenosyl-L-methionine = a 5-methoxy-2-methyl-3-(all-trans-polyprenyl)benzene-1,4-diol + S-adenosyl-L-homocysteine + H(+). The protein operates within cofactor biosynthesis; ubiquinone biosynthesis. In terms of biological role, methyltransferase required for the conversion of 2-polyprenyl-6-methoxy-1,4-benzoquinol (DDMQH2) to 2-polyprenyl-3-methyl-6-methoxy-1,4-benzoquinol (DMQH2). This Arabidopsis thaliana (Mouse-ear cress) protein is 2-methoxy-6-polyprenyl-1,4-benzoquinol methylase, mitochondrial.